Here is a 126-residue protein sequence, read N- to C-terminus: Aspartate 1-decarboxylase (126 aa).

The Schiff-base intermediate with substrate; via pyruvic acid role is filled by Ser-25. Position 25 is a pyruvic acid (Ser) (Ser-25). A substrate-binding site is contributed by Thr-57. Tyr-58 acts as the Proton donor in catalysis. 73 to 75 (GAA) serves as a coordination point for substrate.

The protein belongs to the PanD family. In terms of assembly, heterooctamer of four alpha and four beta subunits. Pyruvate is required as a cofactor. In terms of processing, is synthesized initially as an inactive proenzyme, which is activated by self-cleavage at a specific serine bond to produce a beta-subunit with a hydroxyl group at its C-terminus and an alpha-subunit with a pyruvoyl group at its N-terminus.

Its subcellular location is the cytoplasm. It catalyses the reaction L-aspartate + H(+) = beta-alanine + CO2. It functions in the pathway cofactor biosynthesis; (R)-pantothenate biosynthesis; beta-alanine from L-aspartate: step 1/1. In terms of biological role, catalyzes the pyruvoyl-dependent decarboxylation of aspartate to produce beta-alanine. The polypeptide is Aspartate 1-decarboxylase (Chromohalobacter salexigens (strain ATCC BAA-138 / DSM 3043 / CIP 106854 / NCIMB 13768 / 1H11)).